Here is a 115-residue protein sequence, read N- to C-terminus: UPF0738 protein SAV1005 (115 aa).

This sequence belongs to the UPF0738 family.

This Staphylococcus aureus (strain Mu50 / ATCC 700699) protein is UPF0738 protein SAV1005.